We begin with the raw amino-acid sequence, 328 residues long: MEKAMKYAKIAGSGGYLPERVVTNDDLAAELATRQISTSDEWIVERTGIRQRHLAERGVTTSQLATEAARRAMDDAGVQADEIDMIIVATSTPDYVFPSTACLVQANLGAKGGAAFDVQAVCSGFVYAMTTADNFIRAGRARCALVIGAEVFSRILDWNDRGTCVLFGDGAGAVVLKAADEPGILAAHLHADGSQTKILCAAGNVAYGDVTGDPFLRMDGQAVFKQAVTVLDRSARDVCAEAGVEVDDIDWLIPHQANVRILNFLARKLRVPTERVVITMDQHANTSAASVPLALDVARRDGRVKPGQLVLMQGVGGGFTWGSVLARM.

Catalysis depends on residues C122 and H255. The segment at 256–260 (QANVR) is ACP-binding. N285 is an active-site residue.

It belongs to the thiolase-like superfamily. FabH family. Homodimer.

Its subcellular location is the cytoplasm. The enzyme catalyses malonyl-[ACP] + acetyl-CoA + H(+) = 3-oxobutanoyl-[ACP] + CO2 + CoA. It participates in lipid metabolism; fatty acid biosynthesis. In terms of biological role, catalyzes the condensation reaction of fatty acid synthesis by the addition to an acyl acceptor of two carbons from malonyl-ACP. Catalyzes the first condensation reaction which initiates fatty acid synthesis and may therefore play a role in governing the total rate of fatty acid production. Possesses both acetoacetyl-ACP synthase and acetyl transacylase activities. Its substrate specificity determines the biosynthesis of branched-chain and/or straight-chain of fatty acids. The polypeptide is Beta-ketoacyl-[acyl-carrier-protein] synthase III (Bordetella pertussis (strain Tohama I / ATCC BAA-589 / NCTC 13251)).